The primary structure comprises 322 residues: Undecaprenyl-phosphate 4-deoxy-4-formamido-L-arabinose transferase (322 aa).

The Cytoplasmic portion of the chain corresponds to 1–235; it reads MFEIHPVKKV…TCLTTTPLRM (235 aa). A helical membrane pass occupies residues 236-256; that stretch reads LSLLGSIIAIGGFSIAVLLVI. Residues 257-269 are Periplasmic-facing; the sequence is LRLTFGPQWAAEG. Residues 270–290 form a helical membrane-spanning segment; the sequence is VFMLFAVLFTFIGAQFIGMGL. The Cytoplasmic segment spans residues 291 to 322; the sequence is LGEYIGRIYTDVRARPRYFVQQVIRPSSKENE.

Belongs to the glycosyltransferase 2 family.

The protein localises to the cell inner membrane. It carries out the reaction UDP-4-deoxy-4-formamido-beta-L-arabinose + di-trans,octa-cis-undecaprenyl phosphate = 4-deoxy-4-formamido-alpha-L-arabinopyranosyl di-trans,octa-cis-undecaprenyl phosphate + UDP. It functions in the pathway glycolipid biosynthesis; 4-amino-4-deoxy-alpha-L-arabinose undecaprenyl phosphate biosynthesis; 4-amino-4-deoxy-alpha-L-arabinose undecaprenyl phosphate from UDP-4-deoxy-4-formamido-beta-L-arabinose and undecaprenyl phosphate: step 1/2. Its pathway is bacterial outer membrane biogenesis; lipopolysaccharide biosynthesis. Catalyzes the transfer of 4-deoxy-4-formamido-L-arabinose from UDP to undecaprenyl phosphate. The modified arabinose is attached to lipid A and is required for resistance to polymyxin and cationic antimicrobial peptides. The sequence is that of Undecaprenyl-phosphate 4-deoxy-4-formamido-L-arabinose transferase from Escherichia coli O7:K1 (strain IAI39 / ExPEC).